The primary structure comprises 219 residues: Uracil-DNA glycosylase (219 aa).

Residue Asp63 is the Proton acceptor of the active site.

The protein belongs to the uracil-DNA glycosylase (UDG) superfamily. UNG family.

Its subcellular location is the cytoplasm. The catalysed reaction is Hydrolyzes single-stranded DNA or mismatched double-stranded DNA and polynucleotides, releasing free uracil.. Excises uracil residues from the DNA which can arise as a result of misincorporation of dUMP residues by DNA polymerase or due to deamination of cytosine. The sequence is that of Uracil-DNA glycosylase from Mesomycoplasma hyopneumoniae (strain 7448) (Mycoplasma hyopneumoniae).